Consider the following 250-residue polypeptide: Triosephosphate isomerase, cytosolic (250 aa).

Residues Asn-1 and Lys-3 each contribute to the substrate site. His-87 (electrophile) is an active-site residue. Glu-160 acts as the Proton acceptor in catalysis.

Belongs to the triosephosphate isomerase family. Homodimer.

The protein resides in the cytoplasm. The enzyme catalyses D-glyceraldehyde 3-phosphate = dihydroxyacetone phosphate. Its pathway is carbohydrate biosynthesis; gluconeogenesis. It functions in the pathway carbohydrate degradation; glycolysis; D-glyceraldehyde 3-phosphate from glycerone phosphate: step 1/1. In Gracilaria gracilis (Red alga), this protein is Triosephosphate isomerase, cytosolic (TPI1).